Here is a 351-residue protein sequence, read N- to C-terminus: Dihydroorotate dehydrogenase (quinone) (351 aa).

FMN is bound by residues Ala61–Lys65 and Thr85. Lys65 contacts substrate. Substrate is bound at residue Asn110 to Phe114. Asn139 and Asn172 together coordinate FMN. A substrate-binding site is contributed by Asn172. The active-site Nucleophile is Ser175. Position 177 (Asn177) interacts with substrate. FMN contacts are provided by Lys217 and Thr245. Asn246 to Thr247 provides a ligand contact to substrate. FMN is bound by residues Gly268, Gly297, and Tyr318–Thr319.

Belongs to the dihydroorotate dehydrogenase family. Type 2 subfamily. In terms of assembly, monomer. Requires FMN as cofactor.

Its subcellular location is the cell membrane. It carries out the reaction (S)-dihydroorotate + a quinone = orotate + a quinol. The protein operates within pyrimidine metabolism; UMP biosynthesis via de novo pathway; orotate from (S)-dihydroorotate (quinone route): step 1/1. In terms of biological role, catalyzes the conversion of dihydroorotate to orotate with quinone as electron acceptor. The sequence is that of Dihydroorotate dehydrogenase (quinone) from Xylella fastidiosa (strain 9a5c).